The following is a 1016-amino-acid chain: Protein kinase C-like 2 (1016 aa).

Residues 1–68 (MDMIDEAITE…LEKLKLRKNG (68 aa)) enclose the REM-1 1 domain. The segment at 68-101 (GVRKSNSEKPSVGIEKNPSFSTTKSAKSFSSTSS) is disordered. Over residues 86 to 101 (SFSTTKSAKSFSSTSS) the composition is skewed to low complexity. The REM-1 2 domain occupies 111-188 (NYDTPLTISK…LKRYHDLHIE (78 aa)). The C2 domain occupies 195–307 (PSTESRGNLN…VEKQRRKKVE (113 aa)). Phorbol-ester/DAG-type zinc fingers lie at residues 405-453 (GHKF…VTKC) and 473-523 (PHHF…PDFC). The disordered stretch occupies residues 543 to 602 (YKAQQHKQKSSHHKHHHHKKSKSSSSKHKENDKASVSITTTTTPSITPADPVPTSPKPLA). Positions 546-568 (QQHKQKSSHHKHHHHKKSKSSSS) are enriched in basic residues. Positions 579–590 (SITTTTTPSITP) are enriched in low complexity. The Protein kinase domain occupies 683 to 942 (FTFLSVLGKG…AEDVMTHPFF (260 aa)). ATP contacts are provided by residues 689–697 (LGKGNFGKV) and Lys-712. Catalysis depends on Asp-808, which acts as the Proton acceptor. The AGC-kinase C-terminal domain occupies 943–1013 (SNINWDDIYH…SCEDDKPSTT (71 aa)). A Phosphothreonine modification is found at Thr-984.

The protein belongs to the protein kinase superfamily. AGC Ser/Thr protein kinase family. PKC subfamily. As to quaternary structure, interacts with rho2.

The enzyme catalyses L-seryl-[protein] + ATP = O-phospho-L-seryl-[protein] + ADP + H(+). It catalyses the reaction L-threonyl-[protein] + ATP = O-phospho-L-threonyl-[protein] + ADP + H(+). Its function is as follows. Involved in the control of the cell shape. Target of the inhibitor staurosporine. In Schizosaccharomyces pombe (strain 972 / ATCC 24843) (Fission yeast), this protein is Protein kinase C-like 2 (pck2).